A 236-amino-acid polypeptide reads, in one-letter code: Potassium/proton antiporter CemA (236 aa).

Helical transmembrane passes span 12 to 32 (TVTS…TNHV), 114 to 134 (IANV…LLLG), 161 to 181 (IILF…EILI), and 196 to 216 (FIFL…KYWI).

The protein belongs to the CemA family.

The protein resides in the plastid. The protein localises to the chloroplast inner membrane. It catalyses the reaction K(+)(in) + H(+)(out) = K(+)(out) + H(+)(in). Contributes to K(+)/H(+) antiport activity by supporting proton efflux to control proton extrusion and homeostasis in chloroplasts in a light-dependent manner to modulate photosynthesis. Prevents excessive induction of non-photochemical quenching (NPQ) under continuous-light conditions. Indirectly promotes efficient inorganic carbon uptake into chloroplasts. The chain is Potassium/proton antiporter CemA from Chlorokybus atmophyticus (Soil alga).